Here is a 418-residue protein sequence, read N- to C-terminus: Flavin-dependent L-tryptophan oxidase VioA (418 aa).

Gly13 contacts Mg(2+). Ser15 contributes to the FAD binding site. Position 16 (Gly16) interacts with Mg(2+). The FAD site is built by Asp38, Arg46, and Arg64. Arg64 and His163 together coordinate substrate. Leu208 contributes to the FAD binding site. Ala240 serves as a coordination point for Mg(2+). Residue Tyr309 coordinates substrate. Met398 contacts FAD.

Belongs to the flavin monoamine oxidase family. Homodimer. The cofactor is FAD. Requires Mg(2+) as cofactor.

It carries out the reaction L-tryptophan + O2 = 2-iminio-3-(indol-3-yl)propanoate + H2O2. It catalyses the reaction 7-chloro-L-tryptophan + O2 = 3-(7-chloroindol-3-yl)-2-iminopropanoate + H2O2. It participates in pigment biosynthesis; violacein biosynthesis. The enzyme generates the imine form of indole 3-pyruvate (IPA) from L-tryptophan (L-Trp), with concomitant two-electron reduction of O(2) to H(2)O(2). The sequence is that of Flavin-dependent L-tryptophan oxidase VioA (vioA) from Chromobacterium violaceum (strain ATCC 12472 / DSM 30191 / JCM 1249 / CCUG 213 / NBRC 12614 / NCIMB 9131 / NCTC 9757 / MK).